Here is a 436-residue protein sequence, read N- to C-terminus: 3-ketoacyl-CoA thiolase (436 aa).

The active-site Acyl-thioester intermediate is the cysteine 99. Catalysis depends on proton acceptor residues histidine 392 and cysteine 422.

The protein belongs to the thiolase-like superfamily. Thiolase family. Heterotetramer of two alpha chains (FadJ) and two beta chains (FadI).

It is found in the cytoplasm. The enzyme catalyses an acyl-CoA + acetyl-CoA = a 3-oxoacyl-CoA + CoA. The protein operates within lipid metabolism; fatty acid beta-oxidation. In terms of biological role, catalyzes the final step of fatty acid oxidation in which acetyl-CoA is released and the CoA ester of a fatty acid two carbons shorter is formed. The protein is 3-ketoacyl-CoA thiolase of Salmonella paratyphi A (strain ATCC 9150 / SARB42).